An 885-amino-acid polypeptide reads, in one-letter code: Probable alpha-glucosidase Os06g0675700 (885 aa).

An N-terminal signal peptide occupies residues 1-33 (MMGSPPAPPARRLGALAVFLLALFLAAPWGVDC). N-linked (GlcNAc...) asparagine glycans are attached at residues Asn195, Asn378, and Asn397. Active-site residues include Asp443 and Glu446. 2 N-linked (GlcNAc...) asparagine glycosylation sites follow: Asn467 and Asn477. Asp540 acts as the Proton donor in catalysis. N-linked (GlcNAc...) asparagine glycosylation is found at Asn576 and Asn844.

Belongs to the glycosyl hydrolase 31 family.

The enzyme catalyses Hydrolysis of terminal, non-reducing (1-&gt;4)-linked alpha-D-glucose residues with release of alpha-D-glucose.. In Oryza sativa subsp. japonica (Rice), this protein is Probable alpha-glucosidase Os06g0675700.